The primary structure comprises 2371 residues: NBAS subunit of NRZ tethering complex (2371 aa).

Residues 1–1035 are interaction with USE1; the sequence is MAAPESGPAL…KTEATTKLHD (1035 aa). WD repeat units lie at residues 130-169 and 316-355; these read DPKP…LFVI and QEQD…QQGE. 2 positions are modified to phosphoserine: Ser-473 and Ser-475. Residues 1036–2371 are interaction with ZW10 and RINT1; it reads MVDQLEQILS…TALRAAQHWV (1336 aa). Lys-1057 is subject to N6-acetyllysine.

As to quaternary structure, component of the NRZ complex composed of NBAS, ZW10 and RINT1/TIP20L; NRZ associates with SNAREs STX18, USE1, BNIP1/SEC20L and SEC22B (the assembly has been described as syntaxin 18 complex); links NRZ to SNARE USE1. In terms of tissue distribution, broadly expressed, with highest levels in heart and skeletal muscle, and lowest levels in liver, small intestine and thymus. Well expressed in retinal ganglion cells, epidermal skin cells, and leukocytes. Up-regulated together with N-myc in some neuroblastoma cell lines.

The protein localises to the cytoplasm. The protein resides in the endoplasmic reticulum. It is found in the endoplasmic reticulum membrane. Functionally, involved in Golgi-to-endoplasmic reticulum (ER) retrograde transport; the function is proposed to depend on its association in the NRZ complex which is believed to play a role in SNARE assembly at the ER. Required for normal embryonic development. May play a role in the nonsense-mediated decay pathway of mRNAs containing premature stop codons. This chain is NBAS subunit of NRZ tethering complex, found in Homo sapiens (Human).